Here is a 302-residue protein sequence, read N- to C-terminus: Sulfate adenylyltransferase subunit 2 (302 aa).

This sequence belongs to the PAPS reductase family. CysD subfamily. In terms of assembly, heterodimer composed of CysD, the smaller subunit, and CysN.

The catalysed reaction is sulfate + ATP + H(+) = adenosine 5'-phosphosulfate + diphosphate. The protein operates within sulfur metabolism; hydrogen sulfide biosynthesis; sulfite from sulfate: step 1/3. With CysN forms the ATP sulfurylase (ATPS) that catalyzes the adenylation of sulfate producing adenosine 5'-phosphosulfate (APS) and diphosphate, the first enzymatic step in sulfur assimilation pathway. APS synthesis involves the formation of a high-energy phosphoric-sulfuric acid anhydride bond driven by GTP hydrolysis by CysN coupled to ATP hydrolysis by CysD. The chain is Sulfate adenylyltransferase subunit 2 from Shewanella halifaxensis (strain HAW-EB4).